The sequence spans 550 residues: Probable importin subunit alpha-A (550 aa).

Positions 1 to 30 are enriched in basic and acidic residues; it reads MSSRDKQDSRKKEFKKSLDSETARRKREEN. Residues 1–34 are disordered; sequence MSSRDKQDSRKKEFKKSLDSETARRKREENSIGI. The 56-residue stretch at 1–56 folds into the IBB domain; it reads MSSRDKQDSRKKEFKKSLDSETARRKREENSIGIRKNAREELMLKRRGIVQPNPST. ARM repeat units lie at residues 116 to 155, 158 to 198, 201 to 241, 256 to 297, 300 to 339, 342 to 381, 385 to 424, and 428 to 467; these read YPPIDQVIECGIIPKLNQLLQCNNPKVQFESAWALTNIAS, NRQT…NIAG, VDSR…KIGL, KPQP…YLCD, NTKIQAVIDSGVVPRLVKLLEYPDSIVFTPALRAVGNIVT, SSQTQIVIDNNGVELITRLLAVQKKSIRKESCWALSNITA, SQIDVVVSNPKTVTTLISLLSHSEHDIKREACWALSNSTN, and TKSIQTLVRHNILKHFIDLLNSQDLVILKIVLEGLINIIK.

This sequence belongs to the importin alpha family. As to quaternary structure, forms a complex with tnpo/importin subunit beta.

It is found in the cytoplasm. It localises to the nucleus envelope. Functions in nuclear protein import via a substrate-importin alpha-beta transport complex that passes though the nuclear pore complexes (NPC). Binds specifically and directly to substrates containing either a simple or bipartite NLS motif. The protein is Probable importin subunit alpha-A of Dictyostelium discoideum (Social amoeba).